The primary structure comprises 560 residues: MQQHYDYIIVGAGSAGCVLADRLSESGDHSVLLLEAGGSDKSIFIQMPTALSYPMNSEKYAWQFETDAEADLDGRRLHCPRGKVLGGSSSINGMVYVRGHACDFDEWEEQGAKGWNYQACLPYFRRAENWIDGEDEYRGGDGPLSTCAGNKMTLNPLYRAFIDAGKEAGYPETSDYNGYQQEGFGPMHMTVKNGVRASTSNAYLSRAKKRSNFKLIKGVVVQRILLEEKRAVGVEFELAGELRTCFAKNEVISSAGSIGSVQLLQLSGIGPKTVLEKAGVTPVYHLPGVGQNLQDHLEVYFQYHCQKPITLNGKLDWFSKGLIGTEWILTRKGLGATNHFESCAFIRSRAGLKWPNIQYHFLPAAMRYDGQAAFDGHGFQVHVGPNKPESRGRVEIVSANPLDKPKIQFNYLSTERDRQDWRDCIRLTREILAQPAMDEFRGEEIQPGINVATDAEIDQWVKENVESAYHPSCSCKMGADDDPMAVLDEECRVRGITNLRVVDSSVFPTIPNGNLNAPTIMVAERAADLILHKQPLPPQRSKVWLAPSWETQQRTGEPMR.

6-35 (DYIIVGAGSAGCVLADRLSESGDHSVLLLE) is a binding site for FAD. Histidine 470 functions as the Proton acceptor in the catalytic mechanism.

This sequence belongs to the GMC oxidoreductase family. FAD serves as cofactor.

The enzyme catalyses choline + A = betaine aldehyde + AH2. It catalyses the reaction betaine aldehyde + NAD(+) + H2O = glycine betaine + NADH + 2 H(+). It functions in the pathway amine and polyamine biosynthesis; betaine biosynthesis via choline pathway; betaine aldehyde from choline (cytochrome c reductase route): step 1/1. Functionally, involved in the biosynthesis of the osmoprotectant glycine betaine. Catalyzes the oxidation of choline to betaine aldehyde and betaine aldehyde to glycine betaine at the same rate. The chain is Oxygen-dependent choline dehydrogenase from Vibrio vulnificus (strain YJ016).